The primary structure comprises 360 residues: Peptide chain release factor 1 (360 aa).

Q235 is modified (N5-methylglutamine). Residues 284-313 (AKRQQAEASTRRNLLGSGDRSDRNRTYNFP) are disordered.

The protein belongs to the prokaryotic/mitochondrial release factor family. Post-translationally, methylated by PrmC. Methylation increases the termination efficiency of RF1.

The protein localises to the cytoplasm. Peptide chain release factor 1 directs the termination of translation in response to the peptide chain termination codons UAG and UAA. The polypeptide is Peptide chain release factor 1 (Escherichia coli (strain UTI89 / UPEC)).